The primary structure comprises 283 residues: Zip homologous protein 4 (283 aa).

An RING-type zinc finger spans residues 6-50 (CFRCYKFPSKQIEFYLTNCMHMFCIECERLCHPPEEEPLKCIQCS). 2 disordered regions span residues 149–175 (KKQL…SSRS) and 201–283 (TKAQ…RNSQ). Residues 163–175 (PRSNSLKVASSRS) are compositionally biased toward polar residues. Residues 202-216 (KAQAKAEAEAEAPAK) show a composition bias toward low complexity. A compositionally biased stretch (polar residues) spans 220–235 (SKAQTTKCTSNYQSHP). The segment covering 267–283 (KKHEAQREKHKEHRNSQ) has biased composition (basic and acidic residues).

As to quaternary structure, interacts with zhp-3; the interaction is required for their localization along paired chromosomes and stability, and for the formation of chiasma during meiotic recombination. As to expression, expressed in the germline.

Its subcellular location is the chromosome. Functionally, recruited co-dependently with zhp-3 to the synaptonemal complex between homologous chromosome pairs to regulate the formation and number of crossover events between homologs during meiotic recombination. In the early stages of pachytene, in complex with zhp-4, recruited by the zhp-1-zhp-2 heterodimer to designated crossover sites along the recombination intermediate to stabilize other pro-crossover factors such as rmh-1, msh-5 and cosa-1. This in turn facilitates crossover and promotes the formation of chiasma in each meiotic nucleus at the late pachytene stage of meiosis. Negatively regulates double strand break formation to promote formation of the crossover intermediate. This Caenorhabditis elegans protein is Zip homologous protein 4.